The primary structure comprises 527 residues: UvrABC system protein C (527 aa).

In terms of domain architecture, GIY-YIG spans 9-87; sequence KNPGCYIYKN…IKKYSPKYNI (79 aa). Residues 191–226 form the UVR domain; sequence DSLIHELKNEMNEKSKNLQFEEALLIREEINAIERL.

It belongs to the UvrC family. Interacts with UvrB in an incision complex.

It is found in the cytoplasm. Its function is as follows. The UvrABC repair system catalyzes the recognition and processing of DNA lesions. UvrC both incises the 5' and 3' sides of the lesion. The N-terminal half is responsible for the 3' incision and the C-terminal half is responsible for the 5' incision. The sequence is that of UvrABC system protein C from Methanococcus maripaludis (strain DSM 14266 / JCM 13030 / NBRC 101832 / S2 / LL).